The following is a 400-amino-acid chain: Phosphoglycerate kinase (400 aa).

Substrate-binding positions include 19–21 (DLN), Arg-38, 61–64 (HLGR), Arg-124, and Arg-161. ATP is bound by residues Lys-211, Gly-299, Glu-330, and 356-359 (GGDS).

It belongs to the phosphoglycerate kinase family. Monomer.

It is found in the cytoplasm. It catalyses the reaction (2R)-3-phosphoglycerate + ATP = (2R)-3-phospho-glyceroyl phosphate + ADP. It functions in the pathway carbohydrate degradation; glycolysis; pyruvate from D-glyceraldehyde 3-phosphate: step 2/5. This chain is Phosphoglycerate kinase, found in Frankia casuarinae (strain DSM 45818 / CECT 9043 / HFP020203 / CcI3).